A 546-amino-acid polypeptide reads, in one-letter code: MIEFAVAGANDPIAATVPWLSLSILVPIVGALLVPFIPDSGDGKQIRWYALGVTLITFLITVSAYLNGYDPSLSGLQLSERVSWLPDLGLTWAVGADGLSMPLILLTSFITSLACLAAWPVSFKPRLFYFLLLAMDGGQIAVFAVQDMLLFFLAWELELIPVYLLLAIWGGKKRQYAATKFILYTAGSSLFILLAALAMGFFGGGTPSFEYTALAAKDFGSGFQLLCYAGLLIAFGVKLPIVPLHTWLPDAHGEATAPVHMLLAGILLKMGGYALLRFNCELLPAAHAQFAPLLIVLGVVNIIYAALTSFAQRNLKRKIAYSSISHMGFVLIGVGSFSALGTSGAMLQMISHGLIGASLFFLVGATYDRTHTLQLDEMGGVGQKMRTMFALWTVCALASLALPGMSGFVSELMVFAGFATDEAYTLPFRVVICCLAAVGVILTPIYLLSMLREIFFGKEKQELVSHTNLVDAEPREVYIIGCLLVPIIGIGLYPRLMTDSYSRSIEALVGRDLGAMERITQPTAPLIRGQAPAVPAVLSAPSVPAS.

14 consecutive transmembrane segments (helical) span residues 17–37, 48–68, 103–123, 127–147, 149–169, 181–201, 222–242, 256–276, 290–310, 327–347, 348–368, 389–409, 430–450, and 477–497; these read VPWLSLSILVPIVGALLVPFI, WYALGVTLITFLITVSAYLNG, LILLTSFITSLACLAAWPVSF, LFYFLLLAMDGGQIAVFAVQD, LLFFLAWELELIPVYLLLAIW, FILYTAGSSLFILLAALAMGF, GFQLLCYAGLLIAFGVKLPIV, TAPVHMLLAGILLKMGGYALL, FAPLLIVLGVVNIIYAALTSF, MGFVLIGVGSFSALGTSGAML, QMISHGLIGASLFFLVGATYD, FALWTVCALASLALPGMSGFV, VVICCLAAVGVILTPIYLLSM, and VYIIGCLLVPIIGIGLYPRLM.

This sequence belongs to the complex I subunit 4 family.

It is found in the cellular thylakoid membrane. It carries out the reaction a plastoquinone + NADH + (n+1) H(+)(in) = a plastoquinol + NAD(+) + n H(+)(out). It catalyses the reaction a plastoquinone + NADPH + (n+1) H(+)(in) = a plastoquinol + NADP(+) + n H(+)(out). In terms of biological role, NDH-1 shuttles electrons from NAD(P)H, via FMN and iron-sulfur (Fe-S) centers, to quinones in the respiratory chain. The immediate electron acceptor for the enzyme in this species is believed to be plastoquinone. Couples the redox reaction to proton translocation (for every two electrons transferred, four hydrogen ions are translocated across the cytoplasmic membrane), and thus conserves the redox energy in a proton gradient. The polypeptide is NAD(P)H-quinone oxidoreductase chain 4 (Parasynechococcus marenigrum (strain WH8102)).